The following is a 515-amino-acid chain: Slowpoke-binding protein (515 aa).

Positions 1–31 are disordered; it reads MFKFNKAAQQQRIDNRNSAVTGHDPFVRPPV. Polar residues predominate over residues 7-20; that stretch reads AAQQQRIDNRNSAV. Ser54 and Ser79 each carry phosphoserine. Residues 73 to 82 are compositionally biased toward polar residues; that stretch reads SSNRSASSEQ. Positions 73–94 are disordered; sequence SSNRSASSEQDNSDLSEHSEKS. Residues 191–203 form an interaction with Slo region; the sequence is NWFLVTDASVRTD. The interval 483–503 is disordered; the sequence is SLSEANSPCTPPSTPHDRRTG.

In terms of assembly, interacts specifically with Slo; which activates Slo activity. Interacts with 14-3-3-zeta when phosphorylated. Forms a heterotetrameric complex containing phosphorylated Slob, Slo and 14-3-3-zeta, which represses Slo activity due to the indirect interaction between Slo and 14-3-3-zeta. Phosphorylated. Phosphorylation of Ser-54 and Ser-79 is required for the interaction with 14-3-3-zeta but not with that of Slo. Expressed in head. In larval brain, it is expressed in the mushroom body. Also expressed in larval muscles.

The protein localises to the cytoplasm. Its function is as follows. Regulator of calcium-activated channel Slo. Increases or decreases the voltage sensitivity of Slo, depending on the absence or presence of 14-3-3-zeta in the complex, respectively. In Drosophila melanogaster (Fruit fly), this protein is Slowpoke-binding protein (Slob).